The following is a 2217-amino-acid chain: DNA polymerase epsilon catalytic subunit A (2217 aa).

Positions 2104, 2107, 2126, and 2129 each coordinate Zn(2+). A CysA-type zinc finger spans residues 2104 to 2129 (CEYCSYVSDLDLCRDGLDGKFQCPRC). [4Fe-4S] cluster-binding residues include C2160, C2163, C2175, and C2177. The CysB motif motif lies at 2160–2177 (CEKCHTVKRDLMSTNCNC).

It belongs to the DNA polymerase type-B family. As to quaternary structure, heterotetramer. Consists of 4 subunits: POL2, DPB2, DPB3 and DPB4. [4Fe-4S] cluster serves as cofactor.

The protein resides in the nucleus. It catalyses the reaction DNA(n) + a 2'-deoxyribonucleoside 5'-triphosphate = DNA(n+1) + diphosphate. In terms of biological role, DNA polymerase II participates in chromosomal DNA replication. The polypeptide is DNA polymerase epsilon catalytic subunit A (POL2) (Candida glabrata (strain ATCC 2001 / BCRC 20586 / JCM 3761 / NBRC 0622 / NRRL Y-65 / CBS 138) (Yeast)).